Consider the following 248-residue polypeptide: Small ribosomal subunit protein eS6 (248 aa).

The interval 213–248 (LLAQRKKESKAKREEAKRRRSASMRESKSSISSDKK) is disordered. The segment covering 223 to 248 (AKREEAKRRRSASMRESKSSISSDKK) has biased composition (basic and acidic residues).

The protein belongs to the eukaryotic ribosomal protein eS6 family. As to quaternary structure, component of the small ribosomal subunit. Part of the small subunit (SSU) processome, composed of more than 70 proteins and the RNA chaperone small nucleolar RNA (snoRNA) U3. Ribosomal protein S6 is the major substrate of protein kinases in eukaryote ribosomes.

It is found in the cytoplasm. The protein resides in the nucleus. The protein localises to the nucleolus. Component of the 40S small ribosomal subunit. Plays an important role in controlling cell growth and proliferation through the selective translation of particular classes of mRNA. Part of the small subunit (SSU) processome, first precursor of the small eukaryotic ribosomal subunit. During the assembly of the SSU processome in the nucleolus, many ribosome biogenesis factors, an RNA chaperone and ribosomal proteins associate with the nascent pre-rRNA and work in concert to generate RNA folding, modifications, rearrangements and cleavage as well as targeted degradation of pre-ribosomal RNA by the RNA exosome. This chain is Small ribosomal subunit protein eS6 (RpS6), found in Glossina morsitans morsitans (Savannah tsetse fly).